The primary structure comprises 130 residues: Small ribosomal subunit protein uS8 (130 aa).

It belongs to the universal ribosomal protein uS8 family. In terms of assembly, part of the 30S ribosomal subunit.

One of the primary rRNA binding proteins, it binds directly to 16S rRNA central domain where it helps coordinate assembly of the platform of the 30S subunit. The protein is Small ribosomal subunit protein uS8 of Haloarcula marismortui (strain ATCC 43049 / DSM 3752 / JCM 8966 / VKM B-1809) (Halobacterium marismortui).